The chain runs to 336 residues: Cell division protein ZipA (336 aa).

At 1–6 (MEDLQL) the chain is on the periplasmic side. The chain crosses the membrane as a helical span at residues 7–27 (VLFVLGAIAIIAVLVHGFWSI). At 28–336 (RKQQPKPIKE…DYLRRIKAIV (309 aa)) the chain is on the cytoplasmic side. 2 disordered regions span residues 31–118 (QPKP…PVRA) and 174–200 (YGAT…EPLG). The span at 73-91 (LPSSRNHTSVPVMTLQKAS) shows a compositional bias: polar residues. The segment covering 108–118 (TTAERAEPVRA) has biased composition (basic and acidic residues). The segment covering 179 to 193 (QASPQPASPVQSQAP) has biased composition (low complexity).

This sequence belongs to the ZipA family. As to quaternary structure, interacts with FtsZ via their C-terminal domains.

The protein resides in the cell inner membrane. Its function is as follows. Essential cell division protein that stabilizes the FtsZ protofilaments by cross-linking them and that serves as a cytoplasmic membrane anchor for the Z ring. Also required for the recruitment to the septal ring of downstream cell division proteins. The protein is Cell division protein ZipA of Shewanella denitrificans (strain OS217 / ATCC BAA-1090 / DSM 15013).